A 2620-amino-acid chain; its full sequence is Ankyrin repeat and KH domain-containing protein mask-1 (2620 aa).

12 ANK repeats span residues 254 to 283 (SKIT…DPNV), 288 to 318 (NCNT…KKPD), 361 to 390 (ERDS…KNPP), 402 to 431 (ERYS…PADL), 437 to 466 (IEPS…KIEE), 470 to 502 (KKNT…EVDV), 507 to 536 (TGDT…DLTA), 538 to 566 (KTSP…TIPQ), 568 to 597 (QLSR…DLNF), 600 to 629 (DERT…SVNF), 634 to 663 (NDAT…DPML), and 667 to 697 (DGVN…NMPM). 3 disordered regions span residues 699 to 726 (KDPP…SGQD), 994 to 1032 (HQEE…QPGA), and 1192 to 1229 (SLMA…AIDK). Residues 1012–1029 (TSLTAPNPADTSDVTTKQ) are compositionally biased toward polar residues. Over residues 1192-1206 (SLMAKSVQSQQQQGQ) the composition is skewed to low complexity. Residues 1210–1221 (THSEGDGAERAK) are compositionally biased toward basic and acidic residues. ANK repeat units lie at residues 1234 to 1263 (TLET…NIEH), 1267 to 1296 (KGFS…AIEA), 1301 to 1330 (TKDT…NKEH), 1334 to 1363 (SDYT…EINS), 1369 to 1398 (LGIS…DINA), 1403 to 1432 (NRNT…NVEH), 1436 to 1465 (TGLT…DTNA), 1471 to 1500 (TKDT…AVDV), 1504 to 1533 (KGCT…DPDM), and 1537 to 1566 (RKIS…QFPN). Residues 1596–1648 (AKKAQAESAELAAQKLLELIDEEKVQKEVKKQKQKDKKIKKKEEKKIKKQEAE) are a coiled coil. Disordered regions lie at residues 1621 to 1720 (QKEV…AEEP) and 1759 to 1804 (KEGK…EIDT). Residues 1636–1647 (KKEEKKIKKQEA) show a composition bias toward basic and acidic residues. Residues 1648-1661 (EPEPEPEPEPEPVP) show a composition bias toward acidic residues. 2 stretches are compositionally biased toward low complexity: residues 1665–1681 (PVVI…IVVE) and 1769–1791 (KSGY…TTSS). Positions 1807-1873 (ESSWKLTIPA…EMVRYAMNII (67 aa)) constitute a KH domain. Residues 1899–1913 (ASSFSSEGTSKSAVD) show a composition bias toward polar residues. Disordered regions lie at residues 1899–1962 (ASSF…GNVW), 1976–2010 (LMET…QASE), 2067–2143 (SVQS…QTQN), 2267–2294 (NATS…VTTG), 2307–2343 (SFAP…QQQQ), 2372–2391 (QHQS…KFSM), 2429–2448 (QESS…NSYY), and 2496–2620 (QKKQ…SSNW). Residues 1917-1946 (APSSIPKSLSSASIARQSASPIPQQSSQRS) are compositionally biased toward low complexity. Polar residues predominate over residues 1982-1993 (ISQSPKQAPQIP). Composition is skewed to low complexity over residues 1994–2006 (STQQ…SRQD), 2067–2078 (SVQSVQHMQQQQ), and 2100–2118 (SQPI…SSFS). Polar residues-rich tracts occupy residues 2267–2286 (NATS…VQQP) and 2325–2339 (RSQS…STNI). Polar residues predominate over residues 2505-2528 (SFMHNSQQPQPFGAPSNASANQSR). The span at 2535-2547 (RPQPPPFVAPQAP) shows a compositional bias: pro residues. A compositionally biased stretch (polar residues) spans 2552–2565 (SLGNASSTTNPSRT). Low complexity-rich tracts occupy residues 2566 to 2588 (SMQQ…QMPQ) and 2597 to 2620 (QQQQ…SSNW).

This sequence belongs to the mask family.

Its subcellular location is the cytoplasm. The sequence is that of Ankyrin repeat and KH domain-containing protein mask-1 from Caenorhabditis elegans.